The sequence spans 533 residues: NAD(P)H-quinone oxidoreductase chain 4 2 (533 aa).

14 helical membrane-spanning segments follow: residues 5-25 (FPWLTVLTLLPLVAAFFIPVL), 33-53 (VRWYALAIALLEFGLSAMVFW), 86-106 (LAVPLILLTGLVNTLAIFAAW), 114-134 (LFYFLMLALYSAQIGVFAAQD), 135-155 (LILFFLIWELELVPVYLLISI), 168-188 (FILYTAVGSLFILIAGLGMAF), 208-228 (ALELLAYAGFLIAFGVKLPIF), 242-262 (SAPVSMVLAGVLLKMGGYGLI), 276-296 (FAPVLIALGVVNIIYGALTAF), 310-330 (ISHMGFVLLGIGALNGIGLNG), 331-351 (AMLQMLSHGLIAAVLFFLAGV), 384-404 (ASLALPGMSGFVSELTVFLGL), 416-436 (VGVIFLAAVGVIITPVYLLSM), and 462-482 (TFIALSLLVPIIAVGMYPKVA).

Belongs to the complex I subunit 4 family.

Its subcellular location is the cellular thylakoid membrane. It catalyses the reaction a plastoquinone + NADH + (n+1) H(+)(in) = a plastoquinol + NAD(+) + n H(+)(out). The catalysed reaction is a plastoquinone + NADPH + (n+1) H(+)(in) = a plastoquinol + NADP(+) + n H(+)(out). Functionally, NDH-1 shuttles electrons from NAD(P)H, via FMN and iron-sulfur (Fe-S) centers, to quinones in the respiratory chain. The immediate electron acceptor for the enzyme in this species is believed to be plastoquinone. Couples the redox reaction to proton translocation (for every two electrons transferred, four hydrogen ions are translocated across the cytoplasmic membrane), and thus conserves the redox energy in a proton gradient. The sequence is that of NAD(P)H-quinone oxidoreductase chain 4 2 from Thermosynechococcus vestitus (strain NIES-2133 / IAM M-273 / BP-1).